A 357-amino-acid chain; its full sequence is Protein RecA (357 aa).

67-74 (GPESSGKT) is a binding site for ATP.

Belongs to the RecA family.

Its subcellular location is the cytoplasm. Its function is as follows. Can catalyze the hydrolysis of ATP in the presence of single-stranded DNA, the ATP-dependent uptake of single-stranded DNA by duplex DNA, and the ATP-dependent hybridization of homologous single-stranded DNAs. It interacts with LexA causing its activation and leading to its autocatalytic cleavage. The chain is Protein RecA from Leifsonia xyli subsp. xyli (strain CTCB07).